The sequence spans 165 residues: Ubiquitin-conjugating enzyme E2 G2 (165 aa).

An N-acetylalanine modification is found at Ala2. The 161-residue stretch at 4–164 (TALKRLMAEY…AKQIVQKSLG (161 aa)) folds into the UBC core domain. Cys89 (glycyl thioester intermediate) is an active-site residue.

This sequence belongs to the ubiquitin-conjugating enzyme family. As to quaternary structure, interacts with AUP1 (via C-terminus); the interaction recruits UBE2G2 to lipid droplets. Interacts with ubiquitin ligases AMFR/gp78 and RNF139/TRC8; recruitment to lipid droplets by AUP1 facilitates interaction of UBE2G2 with AMFR and RNF139, leading to sterol-induced ubiquitination of 3-hydroxy-3-methylglutaryl coenzyme A reductase and its subsequent proteasomal degradation.

The protein resides in the endoplasmic reticulum. Its subcellular location is the lipid droplet. It carries out the reaction S-ubiquitinyl-[E1 ubiquitin-activating enzyme]-L-cysteine + [E2 ubiquitin-conjugating enzyme]-L-cysteine = [E1 ubiquitin-activating enzyme]-L-cysteine + S-ubiquitinyl-[E2 ubiquitin-conjugating enzyme]-L-cysteine.. It participates in protein modification; protein ubiquitination. Accepts ubiquitin from the E1 complex and catalyzes its covalent attachment to other proteins. In vitro catalyzes 'Lys-48'-linked polyubiquitination. Involved in endoplasmic reticulum-associated degradation (ERAD). Required for sterol-induced ubiquitination of 3-hydroxy-3-methylglutaryl coenzyme A reductase and its subsequent proteasomal degradation. The chain is Ubiquitin-conjugating enzyme E2 G2 from Homo sapiens (Human).